Here is a 148-residue protein sequence, read N- to C-terminus: 3-dehydroquinate dehydratase (148 aa).

Tyrosine 23 (proton acceptor) is an active-site residue. The substrate site is built by asparagine 74, histidine 80, and aspartate 87. Histidine 100 acts as the Proton donor in catalysis. Residues isoleucine 101 to serine 102 and arginine 111 contribute to the substrate site.

The protein belongs to the type-II 3-dehydroquinase family. Homododecamer.

The catalysed reaction is 3-dehydroquinate = 3-dehydroshikimate + H2O. The protein operates within metabolic intermediate biosynthesis; chorismate biosynthesis; chorismate from D-erythrose 4-phosphate and phosphoenolpyruvate: step 3/7. In terms of biological role, catalyzes a trans-dehydration via an enolate intermediate. In Thermoanaerobacter pseudethanolicus (strain ATCC 33223 / 39E) (Clostridium thermohydrosulfuricum), this protein is 3-dehydroquinate dehydratase.